Consider the following 757-residue polypeptide: MSLLFSRCNSIVTVKKNKRHMAEVNASPLKHFVTAKKKINGIFEQLGAYIQESATFLEDTYRNAELDPVTTEEQVLDVKGYLSKVRGISEVLARRHMKVAFFGRTSNGKSTVINAMLWDKVLPSGIGHTTNCFLRVEGTDGHEAFLLTEGSEEKRSAKTVNQLAHALHQDKQLHAGSLVSVMWPNSKCPLLKDDLVLMDSPGIDVTTELDSWIDKFCLDADVFVLVANSESTLMQTEKHFFHKVSERLSRPNIFILNNRWDASASEPEYMEEVRRQHMERCTSFLVDELGVVDRSQAGDRIFFVSAKEVLNARIQKAQGMPEGGGALAEGFQVRMFEFQNFERRFEECISQSAVKTKFEQHTVRAKQIAEAVRLIMDSLHMAAREQQVYCEEMREERQDRLKFIDKQLELLAQDYKLRIKQITEEVERQVSTAMAEEIRRLSVLVDDYQMDFHPSPVVLKVYKNELHRHIEEGLGRNMSDRCSTAITNSLQTMQQDMIDGLKPLLPVSVRSQIDMLVPRQCFSLNYDLNCDKLCADFQEDIEFHFSLGWTMLVNRFLGPKNSRRALMGYNDQVQRPIPLTPANPSMPPLPQGSLTQEEFMVSMVTGLASLTSRTSMGILVVGGVVWKAVGWRLIALSFGLYGLLYVYERLTWTTKAKERAFKRQFVEHASEKLQLVISYTGSNCSHQVQQELSGTFAHLCQQVDVTRENLEQEIAAMNKKIEVLDSLQSKAKLLRNKAGWLDSELNMFTHQYLQPSR.

Over 1 to 604 (MSLLFSRCNS…TQEEFMVSMV (604 aa)) the chain is Cytoplasmic. The segment at 30–94 (KHFVTAKKKI…VRGISEVLAR (65 aa)) is part of a helix bundle domain, formed by helices from N-terminal and C-terminal regions. A Dynamin-type G domain is found at 93–342 (ARRHMKVAFF…VRMFEFQNFE (250 aa)). Residues 103-110 (GRTSNGKS) are G1 motif. 106-111 (SNGKST) lines the GTP pocket. A Phosphothreonine; by PINK1 modification is found at Thr111. Residues 129–130 (TT) form a G2 motif region. The G3 motif stretch occupies residues 199-202 (DSPG). A GTP-binding site is contributed by 258–261 (NRWD). The tract at residues 258-261 (NRWD) is G4 motif. Residue Glu288 is a region of interest, G5 motif. Positions 305 and 307 each coordinate GTP. The part of a helix bundle domain, formed by helices from N-terminal and C-terminal regions stretch occupies residues 359–385 (EQHTVRAKQIAEAVRLIMDSLHMAARE). Positions 391 to 434 (EEMREERQDRLKFIDKQLELLAQDYKLRIKQITEEVERQVSTAM) form a coiled coil. Position 442 is a phosphoserine; by PINK1 (Ser442). The chain crosses the membrane as a helical span at residues 605-625 (TGLASLTSRTSMGILVVGGVV). Trp626 is a topological domain (mitochondrial intermembrane). A helical transmembrane segment spans residues 627–647 (KAVGWRLIALSFGLYGLLYVY). Residues 648–757 (ERLTWTTKAK…FTHQYLQPSR (110 aa)) are Cytoplasmic-facing. Residues 695 to 738 (TFAHLCQQVDVTRENLEQEIAAMNKKIEVLDSLQSKAKLLRNKA) adopt a coiled-coil conformation. Residues 722 to 753 (EVLDSLQSKAKLLRNKAGWLDSELNMFTHQYL) are part of a helix bundle domain, formed by helices from N-terminal and C-terminal regions.

The protein belongs to the TRAFAC class dynamin-like GTPase superfamily. Dynamin/Fzo/YdjA family. Mitofusin subfamily. As to quaternary structure, forms homomultimers and heteromultimers with MFN1. Oligomerization is essential for mitochondrion fusion. Interacts with VAT1. Interacts with STOML2; may form heterooligomers. Interacts (phosphorylated) with PRKN. Interacts with EIF2AK3. Interacts with THG1L; THG1L probably functions as a guanyl-nucleotide exchange factor/GEF, activating MFN2. In terms of processing, phosphorylated by PINK1. Post-translationally, ubiquitinated by non-degradative ubiquitin by PRKN, promoting mitochondrial fusion; deubiquitination by USP30 inhibits mitochondrial fusion. Ubiquitinated by HUWE1 when dietary stearate (C18:0) levels are low; ubiquitination inhibits mitochondrial fusion. Ubiquitous; expressed at low level. Highly expressed in heart and kidney.

The protein localises to the mitochondrion outer membrane. The enzyme catalyses GTP + H2O = GDP + phosphate + H(+). Functionally, mitochondrial outer membrane GTPase that mediates mitochondrial clustering and fusion. Mitochondria are highly dynamic organelles, and their morphology is determined by the equilibrium between mitochondrial fusion and fission events. Overexpression induces the formation of mitochondrial networks. Membrane clustering requires GTPase activity and may involve a major rearrangement of the coiled coil domains. Plays a central role in mitochondrial metabolism and may be associated with obesity and/or apoptosis processes. Plays an important role in the regulation of vascular smooth muscle cell proliferation. Involved in the clearance of damaged mitochondria via selective autophagy (mitophagy). Is required for PRKN recruitment to dysfunctional mitochondria. Involved in the control of unfolded protein response (UPR) upon ER stress including activation of apoptosis and autophagy during ER stress. Acts as an upstream regulator of EIF2AK3 and suppresses EIF2AK3 activation under basal conditions. This chain is Mitofusin-2, found in Homo sapiens (Human).